The sequence spans 320 residues: Aminoacyl tRNA synthase complex-interacting multifunctional protein 2 (320 aa).

The interval Thr-82–Pro-162 is interaction with PRKN. The interval Pro-162–His-225 is interaction with TP53. Positions Leu-220–Lys-317 constitute a GST C-terminal domain.

As to quaternary structure, part of the multisynthetase complex (MSC), a multisubunit complex that groups tRNA ligases for Arg (RARS1), Asp (DARS1), Gln (QARS1), Ile (IARS1), Leu (LARS1), Lys (KARS1), Met (MARS1) the bifunctional ligase for Glu and Pro (EPRS1) and the auxiliary subunits AIMP1/p43, AIMP2/p38 and EEF1E1/p18. Interacts (via N-terminus) with KARS1. Interacts with EPRS1. Forms a linear complex that contains MARS1, EEF1E1, EPRS1 and AIMP2 that is at the core of the multisubunit complex. Binds FUBP1 (via C-terminus). Interacts in both its unphosphorylated and phosphorylated forms with p53/TP53 (via N-terminus) in the nucleus following UV irradiation. Interacts (via N-terminus) with PRKN/parkin (via first RING-type domain). Interacts with TARS3. Post-translationally, phosphorylated on serine residues in response to UV irradiation. Ubiquitinated by PRKN, leading to its degradation by the proteasome. Mutant PRKN fails to ubiquitinate AIMP2 efficiently, allowing its accumulation which may contribute to neurodegeneration associated with Parkinson disease.

The protein resides in the cytoplasm. Its subcellular location is the cytosol. The protein localises to the nucleus. Functionally, required for assembly and stability of the aminoacyl-tRNA synthase complex. Mediates ubiquitination and degradation of FUBP1, a transcriptional activator of MYC, leading to MYC down-regulation which is required for aveolar type II cell differentiation. Blocks MDM2-mediated ubiquitination and degradation of p53/TP53. Functions as a proapoptotic factor. The protein is Aminoacyl tRNA synthase complex-interacting multifunctional protein 2 (AIMP2) of Homo sapiens (Human).